Reading from the N-terminus, the 286-residue chain is Release factor glutamine methyltransferase (286 aa).

The S-adenosyl-L-methionine site is built by D136 and N179. 179-182 (NPPY) is a substrate binding site.

Belongs to the protein N5-glutamine methyltransferase family. PrmC subfamily.

The catalysed reaction is L-glutaminyl-[peptide chain release factor] + S-adenosyl-L-methionine = N(5)-methyl-L-glutaminyl-[peptide chain release factor] + S-adenosyl-L-homocysteine + H(+). Functionally, methylates the class 1 translation termination release factors RF1/PrfA and RF2/PrfB on the glutamine residue of the universally conserved GGQ motif. The chain is Release factor glutamine methyltransferase from Borreliella burgdorferi (strain ATCC 35210 / DSM 4680 / CIP 102532 / B31) (Borrelia burgdorferi).